Reading from the N-terminus, the 66-residue chain is ARDAYIAKPHNCVYECYNPKGSYCNDLCTENGAESGYCQILGKYGNACWCIQLPDNVPIRIPGKCH.

The region spanning 2-66 (RDAYIAKPHN…VPIRIPGKCH (65 aa)) is the LCN-type CS-alpha/beta domain. 4 disulfide bridges follow: Cys-12/Cys-65, Cys-16/Cys-38, Cys-24/Cys-48, and Cys-28/Cys-50.

The protein belongs to the long (4 C-C) scorpion toxin superfamily. Sodium channel inhibitor family. Alpha subfamily. In terms of tissue distribution, expressed by the venom gland.

Its subcellular location is the secreted. Its function is as follows. Alpha toxins bind voltage-independently at site-3 of sodium channels (Nav) and inhibit the inactivation of the activated channels, thereby blocking neuronal transmission. This toxin is active on both mammals and insects, since it inhibits inactivation of rNav1.4/SCN4A, hNav1.5/SCN5A, mNav1.6/SCN8A and insect BgNav1 and DmNav1 channels. In vivo, it shows paralytic activity in mice. The chain is Alpha-like toxin BeM9 from Mesobuthus eupeus (Lesser Asian scorpion).